Here is a 232-residue protein sequence, read N- to C-terminus: Orotidine 5'-phosphate decarboxylase (232 aa).

Substrate contacts are provided by residues Asp-11, Lys-33, 60-69 (DLKFHDIPTT), Thr-120, Arg-181, Gln-191, Gly-211, and Arg-212. Residue Lys-62 is the Proton donor of the active site.

It belongs to the OMP decarboxylase family. Type 1 subfamily. Homodimer.

It catalyses the reaction orotidine 5'-phosphate + H(+) = UMP + CO2. Its pathway is pyrimidine metabolism; UMP biosynthesis via de novo pathway; UMP from orotate: step 2/2. Catalyzes the decarboxylation of orotidine 5'-monophosphate (OMP) to uridine 5'-monophosphate (UMP). The chain is Orotidine 5'-phosphate decarboxylase from Tolumonas auensis (strain DSM 9187 / NBRC 110442 / TA 4).